A 152-amino-acid polypeptide reads, in one-letter code: SsrA-binding protein (152 aa).

This sequence belongs to the SmpB family.

The protein localises to the cytoplasm. Required for rescue of stalled ribosomes mediated by trans-translation. Binds to transfer-messenger RNA (tmRNA), required for stable association of tmRNA with ribosomes. tmRNA and SmpB together mimic tRNA shape, replacing the anticodon stem-loop with SmpB. tmRNA is encoded by the ssrA gene; the 2 termini fold to resemble tRNA(Ala) and it encodes a 'tag peptide', a short internal open reading frame. During trans-translation Ala-aminoacylated tmRNA acts like a tRNA, entering the A-site of stalled ribosomes, displacing the stalled mRNA. The ribosome then switches to translate the ORF on the tmRNA; the nascent peptide is terminated with the 'tag peptide' encoded by the tmRNA and targeted for degradation. The ribosome is freed to recommence translation, which seems to be the essential function of trans-translation. This chain is SsrA-binding protein, found in Helicobacter pylori (strain HPAG1).